Here is a 296-residue protein sequence, read N- to C-terminus: tRNA dimethylallyltransferase (296 aa).

ATP is bound at residue 10–17 (GPTASGKT). 12–17 (TASGKT) contributes to the substrate binding site. The interval 35–38 (DSRQ) is interaction with substrate tRNA.

It belongs to the IPP transferase family. In terms of assembly, monomer. It depends on Mg(2+) as a cofactor.

It catalyses the reaction adenosine(37) in tRNA + dimethylallyl diphosphate = N(6)-dimethylallyladenosine(37) in tRNA + diphosphate. In terms of biological role, catalyzes the transfer of a dimethylallyl group onto the adenine at position 37 in tRNAs that read codons beginning with uridine, leading to the formation of N6-(dimethylallyl)adenosine (i(6)A). The chain is tRNA dimethylallyltransferase from Synechococcus sp. (strain RCC307).